The chain runs to 462 residues: 3-isopropylmalate dehydratase large subunit (462 aa).

3 residues coordinate [4Fe-4S] cluster: C337, C397, and C400.

This sequence belongs to the aconitase/IPM isomerase family. LeuC type 1 subfamily. As to quaternary structure, heterodimer of LeuC and LeuD. The cofactor is [4Fe-4S] cluster.

It catalyses the reaction (2R,3S)-3-isopropylmalate = (2S)-2-isopropylmalate. It participates in amino-acid biosynthesis; L-leucine biosynthesis; L-leucine from 3-methyl-2-oxobutanoate: step 2/4. Functionally, catalyzes the isomerization between 2-isopropylmalate and 3-isopropylmalate, via the formation of 2-isopropylmaleate. This is 3-isopropylmalate dehydratase large subunit from Listeria innocua serovar 6a (strain ATCC BAA-680 / CLIP 11262).